The primary structure comprises 554 residues: Probable phospholipase D F09G2.8 (554 aa).

Residues 1 to 123 lie on the Cytoplasmic side of the membrane; it reads MPLRLINFRQ…GNSRNRIIKP (123 aa). The helical; Signal-anchor for type II membrane protein transmembrane segment at 124-144 threads the bilayer; the sequence is ACVPISIVSLFIIALVFLPLF. The Extracellular segment spans residues 145–554; sequence NEEDLASPIK…DWNSEYSKDL (410 aa). N-linked (GlcNAc...) asparagine glycans are attached at residues asparagine 181, asparagine 208, asparagine 244, and asparagine 266. The 28-residue stretch at 272-299 folds into the PLD phosphodiesterase 1 domain; the sequence is GSGIIHTKFILSDIATLYIGSANMDWKS. Residues histidine 277, lysine 279, and aspartate 284 contribute to the active site. Asparagine 333, asparagine 350, asparagine 468, and asparagine 513 each carry an N-linked (GlcNAc...) asparagine glycan. Positions 492–518 constitute a PLD phosphodiesterase 2 domain; it reads FTRVNHAKYMVTEDIAYIGTSNWSGDY.

The protein belongs to the phospholipase D family.

The protein resides in the membrane. The enzyme catalyses a 1,2-diacyl-sn-glycero-3-phosphocholine + H2O = a 1,2-diacyl-sn-glycero-3-phosphate + choline + H(+). The polypeptide is Probable phospholipase D F09G2.8 (Caenorhabditis elegans).